Consider the following 429-residue polypeptide: High mobility group nucleosome-binding domain-containing protein 5 (429 aa).

The disordered stretch occupies residues 1-429; that stretch reads MPKRKAAGDA…GEKGEPVSTV (429 aa). T29 is modified (phosphothreonine). Basic residues predominate over residues 35-44; sequence KRASTSRKTK. A Glycyl lysine isopeptide (Lys-Gly) (interchain with G-Cter in SUMO2) cross-link involves residue K64. The residue at position 90 (S90) is a Phosphoserine. Basic and acidic residues-rich tracts occupy residues 92–101 and 109–124; these read METEEVKEQI and GGEKKEAVVTKGKNDE. Residue K98 forms a Glycyl lysine isopeptide (Lys-Gly) (interchain with G-Cter in SUMO1); alternate linkage. A Glycyl lysine isopeptide (Lys-Gly) (interchain with G-Cter in SUMO2); alternate cross-link involves residue K98. A Glycyl lysine isopeptide (Lys-Gly) (interchain with G-Cter in SUMO2) cross-link involves residue K121. Residues 133–152 are compositionally biased toward acidic residues; the sequence is EKDEDEKEHEDTGEEGEDGE. The segment covering 153–195 has biased composition (basic and acidic residues); the sequence is REGGLKEKPDVAEIEDAKEAKDDEEKEDKEKEDDKGGDGKKEE. Residues 196-209 show a composition bias toward acidic residues; it reads EKDDEGEAETEEEV. Basic and acidic residues-rich tracts occupy residues 210 to 387 and 413 to 429; these read KEQQ…NEDR and NKDFKEDGEKGEPVSTV.

Belongs to the HMGN family. In terms of tissue distribution, expressed in trophoblast giant cells.

Its subcellular location is the nucleus. Functionally, preferentially binds to euchromatin and modulates cellular transcription by counteracting linker histone-mediated chromatin compaction. The protein is High mobility group nucleosome-binding domain-containing protein 5 of Rattus norvegicus (Rat).